A 320-amino-acid polypeptide reads, in one-letter code: 3'-5' exoribonuclease YhaM (320 aa).

A DNA-binding region (OB) is located at residues 18-90; sequence FLIKSATKAV…QLKIGSIRPT (73 aa). Residues 163–279 enclose the HD domain; it reads HVVCMLNVAK…LHMIDNIDAK (117 aa).

It belongs to the YhaM family.

Its function is as follows. Shows a 3'-5' exoribonuclease activity. This is 3'-5' exoribonuclease YhaM from Halalkalibacterium halodurans (strain ATCC BAA-125 / DSM 18197 / FERM 7344 / JCM 9153 / C-125) (Bacillus halodurans).